The sequence spans 110 residues: U1-lycotoxin-Ls1jj (110 aa).

Positions 1–20 (MKFVLLFGVLLVTLFSYSSA) are cleaved as a signal peptide. The propeptide occupies 21 to 44 (EMLDDFDQADEDELLSLIEKEEAR). Cystine bridges form between cysteine 47-cysteine 62, cysteine 54-cysteine 71, cysteine 61-cysteine 89, and cysteine 73-cysteine 87.

This sequence belongs to the neurotoxin 19 (CSTX) family. 03 subfamily. Expressed by the venom gland.

The protein resides in the secreted. The polypeptide is U1-lycotoxin-Ls1jj (Lycosa singoriensis (Wolf spider)).